The chain runs to 222 residues: Ribosomal RNA small subunit methyltransferase I (222 aa).

It belongs to the methyltransferase superfamily. RsmI family.

It is found in the cytoplasm. The catalysed reaction is cytidine(1402) in 16S rRNA + S-adenosyl-L-methionine = 2'-O-methylcytidine(1402) in 16S rRNA + S-adenosyl-L-homocysteine + H(+). Functionally, catalyzes the 2'-O-methylation of the ribose of cytidine 1402 (C1402) in 16S rRNA. In Thermotoga maritima (strain ATCC 43589 / DSM 3109 / JCM 10099 / NBRC 100826 / MSB8), this protein is Ribosomal RNA small subunit methyltransferase I.